We begin with the raw amino-acid sequence, 257 residues long: Major prion protein (257 aa).

A signal peptide spans 1-24; that stretch reads MVKSHIGGWILVLFVAAWSDIGLC. The segment at 25-234 is interaction with GRB2, ERI3 and SYN1; sequence KKRPKPGGGW…EYEAYAQRGA (210 aa). Residues 28-113 are disordered; that stretch reads PKPGGGWNTG…NKPSKPKTNM (86 aa). Repeat copies occupy residues 54–62, 63–70, 71–78, 79–86, and 87–95. The segment at 54–95 is 5 X 8 AA tandem repeats of P-H-G-G-G-W-G-Q; the sequence is PQGGGGWGQPHGGGWGQPHGGGWGQPHGGGWGQPHGGGGWGQ. Gly residues predominate over residues 55–100; sequence QGGGGWGQPHGGGWGQPHGGGWGQPHGGGWGQPHGGGGWGQGGGSH. Cu(2+) contacts are provided by His64, Gly65, Gly66, His72, Gly73, Gly74, His80, Gly81, Gly82, His88, Gly90, and Gly91. A disulfide bridge links Cys183 with Cys218. Residues Asn185 and Asn201 are each glycosylated (N-linked (GlcNAc...) asparagine). Ala234 is lipidated: GPI-anchor amidated alanine. The propeptide at 235–257 is removed in mature form; the sequence is SVILFSSPPVILLISFLLFLIVG.

The protein belongs to the prion family. In terms of assembly, monomer and homodimer. Has a tendency to aggregate into amyloid fibrils containing a cross-beta spine, formed by a steric zipper of superposed beta-strands. Soluble oligomers may represent an intermediate stage on the path to fibril formation. Copper binding may promote oligomerization. Interacts with GRB2, APP, ERI3/PRNPIP and SYN1. Mislocalized cytosolically exposed PrP interacts with MGRN1; this interaction alters MGRN1 subcellular location and causes lysosomal enlargement. Interacts with KIAA1191.

The protein localises to the cell membrane. The protein resides in the golgi apparatus. In terms of biological role, its primary physiological function is unclear. Has cytoprotective activity against internal or environmental stresses. May play a role in neuronal development and synaptic plasticity. May be required for neuronal myelin sheath maintenance. May play a role in iron uptake and iron homeostasis. Soluble oligomers are toxic to cultured neuroblastoma cells and induce apoptosis (in vitro). Association with GPC1 (via its heparan sulfate chains) targets PRNP to lipid rafts. Also provides Cu(2+) or Zn(2+) for the ascorbate-mediated GPC1 deaminase degradation of its heparan sulfate side chains. The sequence is that of Major prion protein (PRNP) from Sus scrofa (Pig).